The following is a 271-amino-acid chain: Cobalt import ATP-binding protein CbiO (271 aa).

One can recognise an ABC transporter domain in the interval 2–236 (LATSDLWFRY…TEAMEHAGLT (235 aa)). 34–41 (GANGCGKS) serves as a coordination point for ATP.

This sequence belongs to the ABC transporter superfamily. Cobalt importer (TC 3.A.1.18.1) family. In terms of assembly, forms an energy-coupling factor (ECF) transporter complex composed of an ATP-binding protein (A component, CbiO), a transmembrane protein (T component, CbiQ) and 2 possible substrate-capture proteins (S components, CbiM and CbiN) of unknown stoichimetry. Expression of just CbiMN in E.coli confers some cobalt uptake.

The protein localises to the cell inner membrane. The protein operates within cofactor biosynthesis; adenosylcobalamin biosynthesis. Functionally, part of the energy-coupling factor (ECF) transporter complex CbiMNOQ involved in cobalt import. The complex confers cobalt uptake upon expression in E.coli; can also transport nickel with a very low affinity. Presumably responsible for energy coupling to the transport system. The polypeptide is Cobalt import ATP-binding protein CbiO (Salmonella typhimurium (strain LT2 / SGSC1412 / ATCC 700720)).